We begin with the raw amino-acid sequence, 391 residues long: Elongation factor Tu 2 (391 aa).

Residues 10–201 form the tr-type G domain; the sequence is KPHVNIGTIG…EVDNYIPTPE (192 aa). The interval 19-26 is G1; that stretch reads GHVDHGKT. 19-26 contacts GTP; sequence GHVDHGKT. Residue Thr26 participates in Mg(2+) binding. Residues 55 to 59 are G2; the sequence is GITIS. The tract at residues 76–79 is G3; it reads DCPG. Residues 76-80 and 131-134 contribute to the GTP site; these read DCPGH and NKVD. The interval 131 to 134 is G4; that stretch reads NKVD. Residues 169–171 form a G5 region; that stretch reads SAL.

Belongs to the TRAFAC class translation factor GTPase superfamily. Classic translation factor GTPase family. EF-Tu/EF-1A subfamily. As to quaternary structure, monomer.

It is found in the cytoplasm. It catalyses the reaction GTP + H2O = GDP + phosphate + H(+). Its function is as follows. GTP hydrolase that promotes the GTP-dependent binding of aminoacyl-tRNA to the A-site of ribosomes during protein biosynthesis. The chain is Elongation factor Tu 2 from Bartonella quintana (strain Toulouse) (Rochalimaea quintana).